Reading from the N-terminus, the 525-residue chain is GMP synthase [glutamine-hydrolyzing] (525 aa).

The Glutamine amidotransferase type-1 domain maps to 16-205 (PVLVVDFGAQ…LHDFAGLGAQ (190 aa)). The Nucleophile role is filled by cysteine 93. Residues histidine 179 and glutamate 181 contribute to the active site. Residues 206 to 399 (WTPANIANAL…LGLPEEIVAR (194 aa)) form the GMPS ATP-PPase domain. Residue 233 to 239 (SGGVDSA) participates in ATP binding.

In terms of assembly, homodimer.

The enzyme catalyses XMP + L-glutamine + ATP + H2O = GMP + L-glutamate + AMP + diphosphate + 2 H(+). It functions in the pathway purine metabolism; GMP biosynthesis; GMP from XMP (L-Gln route): step 1/1. In terms of biological role, catalyzes the synthesis of GMP from XMP. The chain is GMP synthase [glutamine-hydrolyzing] (guaA) from Mycobacterium tuberculosis (strain CDC 1551 / Oshkosh).